A 418-amino-acid chain; its full sequence is MMNIELAPSGEEFTLSPTVIKVIGAGGGGSNAVNRMMSCGLQCVEFIAANTDVQALSYSTAPKKLAIGTKVTRGLGAGGDPEIGEKAAMEDAEAIASALQGANMVFITAGMGGGTGTGAAPVIAKIARELGALTVAVVTKPFRFEGRAKMMLAERGIEKLRTHSDTVIVIPNQNLLSVVDKRCPIKETYLVADDLLRKSVQSISDLITLPGEVNLDFMDVKNTMEGQGYALIGVGEGEGENRAVDAATAAINNPLLEETRIEGATRLLVAVRGSENLSMGEVDGVMSVVAKTIDPDAIIIHGTSIDASMQDRVRVTVIATGVPQASISIAGDTHSSQKIKTSSYGAVSTGVYISSDEWNRAKSSKQPNLPGLATRNSAVQETRMEKNGVKGHTFGVPLPSVNEDLDEPTFLRNRNKGL.

GTP-binding positions include 27–31, 114–116, Glu-145, Lys-149, and Asp-193; these read GGGSN and GTG. The tract at residues 386-418 is disordered; that stretch reads KNGVKGHTFGVPLPSVNEDLDEPTFLRNRNKGL.

This sequence belongs to the FtsZ family. Homodimer. Polymerizes to form a dynamic ring structure in a strictly GTP-dependent manner. Interacts directly with several other division proteins.

Its subcellular location is the cytoplasm. In terms of biological role, essential cell division protein that forms a contractile ring structure (Z ring) at the future cell division site. The regulation of the ring assembly controls the timing and the location of cell division. One of the functions of the FtsZ ring is to recruit other cell division proteins to the septum to produce a new cell wall between the dividing cells. Binds GTP and shows GTPase activity. This Treponema pallidum (strain Nichols) protein is Cell division protein FtsZ.